The following is a 336-amino-acid chain: tRNA N6-adenosine threonylcarbamoyltransferase (336 aa).

H114 and H118 together coordinate Fe cation. Residues 136–140, D169, G182, D186, and N275 each bind substrate; that span reads LVSGG. D301 serves as a coordination point for Fe cation.

The protein belongs to the KAE1 / TsaD family. It depends on Fe(2+) as a cofactor.

The protein localises to the cytoplasm. It carries out the reaction L-threonylcarbamoyladenylate + adenosine(37) in tRNA = N(6)-L-threonylcarbamoyladenosine(37) in tRNA + AMP + H(+). In terms of biological role, required for the formation of a threonylcarbamoyl group on adenosine at position 37 (t(6)A37) in tRNAs that read codons beginning with adenine. Is involved in the transfer of the threonylcarbamoyl moiety of threonylcarbamoyl-AMP (TC-AMP) to the N6 group of A37, together with TsaE and TsaB. TsaD likely plays a direct catalytic role in this reaction. The polypeptide is tRNA N6-adenosine threonylcarbamoyltransferase (Streptococcus pneumoniae serotype 4 (strain ATCC BAA-334 / TIGR4)).